A 307-amino-acid chain; its full sequence is NAD kinase 2 (307 aa).

The Proton acceptor role is filled by Asp-77. NAD(+) contacts are provided by residues 77 to 78 (DG), 151 to 152 (NE), Asp-181, 192 to 197 (TAYALS), and Asn-251.

The protein belongs to the NAD kinase family. The cofactor is a divalent metal cation.

It is found in the cytoplasm. It carries out the reaction NAD(+) + ATP = ADP + NADP(+) + H(+). Its function is as follows. Involved in the regulation of the intracellular balance of NAD and NADP, and is a key enzyme in the biosynthesis of NADP. Catalyzes specifically the phosphorylation on 2'-hydroxyl of the adenosine moiety of NAD to yield NADP. This chain is NAD kinase 2, found in Thermosynechococcus vestitus (strain NIES-2133 / IAM M-273 / BP-1).